The following is a 282-amino-acid chain: Flagellin (282 aa).

This sequence belongs to the bacterial flagellin family.

It is found in the secreted. Its subcellular location is the bacterial flagellum. In terms of biological role, flagellin is the subunit protein which polymerizes to form the filaments of bacterial flagella. The flagellum is required to cause a persistent disease in a murine model of infection. This is Flagellin (fliC) from Brucella melitensis biotype 1 (strain ATCC 23456 / CCUG 17765 / NCTC 10094 / 16M).